A 901-amino-acid polypeptide reads, in one-letter code: Viral-enhancing factor (901 aa).

The Peptidase M60 domain occupies 27-330 (HRRTEVGVVL…IFTWLYNPQR (304 aa)). N-linked (GlcNAc...) asparagine; by host glycans are attached at residues asparagine 265, asparagine 278, asparagine 339, asparagine 349, asparagine 540, asparagine 594, asparagine 595, asparagine 642, asparagine 683, and asparagine 698.

Functionally, involved in disruption of the peritrophic membrane and fusion of nucleocapsids with midgut cells. The protein is Viral-enhancing factor (VEF) of Pseudalatia unipuncta granulosis virus (PuGV).